The chain runs to 82 residues: M-theraphotoxin-Gr1a (82 aa).

An N-terminal signal peptide occupies residues 1–21 (MKTSVVFVIAGLALLSVVCYA). A propeptide spanning residues 22 to 46 (SELKEQSSVNEVLSTIFHFEQPEER) is cleaved from the precursor. Disulfide bonds link cysteine 48-cysteine 63, cysteine 55-cysteine 69, and cysteine 62-cysteine 76. Position 80 is a phenylalanine amide (phenylalanine 80).

This sequence belongs to the neurotoxin 10 (Hwtx-1) family. 52 (MTx4) subfamily. In terms of tissue distribution, expressed by the venom gland.

Its subcellular location is the secreted. Its function is as follows. This cationic hydrophobic peptide acts on a lot of different channels and has an antimicrobial activity. It blocks mechanosensitive ion channels (also named stretch-activated channels or SACs), without having effect on whole-cell voltage-sensitive currents. It also affects acetylcholine receptors (nAChRs) through interactions with membrane lipids by prolonging the closing time without affecting channel conductance or opening activity. It shows high affinity for lipid bilayers. It acts by partitioning into the membrane and perturbing the interface between the channel and the lipid bilayer without necessarily being in physical contact with the channel. It inhibits atrial fibrillation as well as the membrane motor of outer hair cells at low doses. It also binds to the voltage sensor of voltage-gated potassium channels from the archaebacterium Aeropyrum pernix (KvAP) without affecting channel gating. It also shows a low inhibition on a large spectra of sodium channels (Nav1.1/SCN1A, Nav1.2/SCN2A, Nav1.3/SCN3A, Nav1.4/SCN4A, Nav1.5/SCN5A, Nav1.6/SCN8A, Nav1.7/SCN9A) (IC(50)=7.4-14 uM), and potassium channels Kv11.1/KCNH2 and Kv11.2/KCNH6 (IC(50)=11 uM for both). It exhibits antimicrobial activities against the Gram-positive bacteria B.subtilis (MIC=0.5 uM), S.aureus (MIC=2-4 uM), and S.epidermidis (MIC=4-8 uM), and Gram-negative bacteria S.typhimurium (MIC=32.64 uM), P.aeruginosa (MIC=8-16 uM), and E.coli (MIC=8-16 uM). This Grammostola rosea (Chilean rose tarantula) protein is M-theraphotoxin-Gr1a.